We begin with the raw amino-acid sequence, 155 residues long: SsrA-binding protein (155 aa).

Basic and acidic residues predominate over residues 123-142 (DLHDKRETEKKRDWEREKGQ). The disordered stretch occupies residues 123–155 (DLHDKRETEKKRDWEREKGQLMRHKISSPRKDT). Over residues 143–155 (LMRHKISSPRKDT) the composition is skewed to basic residues.

The protein belongs to the SmpB family.

The protein resides in the cytoplasm. Required for rescue of stalled ribosomes mediated by trans-translation. Binds to transfer-messenger RNA (tmRNA), required for stable association of tmRNA with ribosomes. tmRNA and SmpB together mimic tRNA shape, replacing the anticodon stem-loop with SmpB. tmRNA is encoded by the ssrA gene; the 2 termini fold to resemble tRNA(Ala) and it encodes a 'tag peptide', a short internal open reading frame. During trans-translation Ala-aminoacylated tmRNA acts like a tRNA, entering the A-site of stalled ribosomes, displacing the stalled mRNA. The ribosome then switches to translate the ORF on the tmRNA; the nascent peptide is terminated with the 'tag peptide' encoded by the tmRNA and targeted for degradation. The ribosome is freed to recommence translation, which seems to be the essential function of trans-translation. This chain is SsrA-binding protein, found in Methylibium petroleiphilum (strain ATCC BAA-1232 / LMG 22953 / PM1).